The primary structure comprises 346 residues: Uroporphyrinogen decarboxylase (346 aa).

Substrate-binding positions include 21–25 (RQAGR), Phe40, Asp71, Tyr146, Ser201, and His316.

The protein belongs to the uroporphyrinogen decarboxylase family. As to quaternary structure, homodimer.

It localises to the cytoplasm. The enzyme catalyses uroporphyrinogen III + 4 H(+) = coproporphyrinogen III + 4 CO2. It functions in the pathway porphyrin-containing compound metabolism; protoporphyrin-IX biosynthesis; coproporphyrinogen-III from 5-aminolevulinate: step 4/4. Catalyzes the decarboxylation of four acetate groups of uroporphyrinogen-III to yield coproporphyrinogen-III. This Rickettsia felis (strain ATCC VR-1525 / URRWXCal2) (Rickettsia azadi) protein is Uroporphyrinogen decarboxylase.